Reading from the N-terminus, the 204-residue chain is High frequency lysogenization protein HflD homolog (204 aa).

It belongs to the HflD family.

Its subcellular location is the cytoplasm. It localises to the cell inner membrane. The sequence is that of High frequency lysogenization protein HflD homolog from Actinobacillus succinogenes (strain ATCC 55618 / DSM 22257 / CCUG 43843 / 130Z).